We begin with the raw amino-acid sequence, 333 residues long: Probable tRNA pseudouridine synthase B (333 aa).

The active-site Nucleophile is Asp-66. One can recognise a PUA domain in the interval 233 to 308 (LKKIIVKDSA…EVVEITRVIM (76 aa)).

The protein belongs to the pseudouridine synthase TruB family. Type 2 subfamily.

The catalysed reaction is uridine(55) in tRNA = pseudouridine(55) in tRNA. In terms of biological role, could be responsible for synthesis of pseudouridine from uracil-55 in the psi GC loop of transfer RNAs. The protein is Probable tRNA pseudouridine synthase B of Methanococcus maripaludis (strain C6 / ATCC BAA-1332).